The primary structure comprises 447 residues: Dirigent protein 10 (447 aa).

Positions 1 to 21 are cleaved as a signal peptide; the sequence is MAGQKILSLLVIALVVTFAAA. The segment covering 74–85 has biased composition (gly residues); it reads SGSTGSGLGAGT. The interval 74–123 is disordered; it reads SGSTGSGLGAGTGSIPSSGSGPGLLPTASSVPGSLAGGGSGSLPTTGSAT. Residues 86 to 107 show a composition bias toward low complexity; the sequence is GSIPSSGSGPGLLPTASSVPGS.

It belongs to the plant dirigent protein family. As to quaternary structure, homodimer. As to expression, in roots, mostly detected in root endodermis and quiescent center, and, to a lower extent, in root stele and cortex. Expressed in root vascular cylinder, flowers, siliques, cotyledon and leaf veins, and leaf margins. Present in the basal region of rosette leaf trichomes and in developing xylem.

The protein resides in the secreted. It is found in the extracellular space. It localises to the apoplast. In terms of biological role, dirigent proteins impart stereoselectivity on the phenoxy radical-coupling reaction, yielding optically active lignans from two molecules of coniferyl alcohol in the biosynthesis of lignans, flavonolignans, and alkaloids and thus plays a central role in plant secondary metabolism. Regulates suberin accumulation in roots. In Arabidopsis thaliana (Mouse-ear cress), this protein is Dirigent protein 10 (DIR10).